The primary structure comprises 206 residues: Ribosomal RNA small subunit methyltransferase G (206 aa).

Residues glycine 73, leucine 78, 124–125 (VE), and arginine 139 each bind S-adenosyl-L-methionine.

The protein belongs to the methyltransferase superfamily. RNA methyltransferase RsmG family.

It is found in the cytoplasm. It carries out the reaction guanosine(527) in 16S rRNA + S-adenosyl-L-methionine = N(7)-methylguanosine(527) in 16S rRNA + S-adenosyl-L-homocysteine. Functionally, specifically methylates the N7 position of guanine in position 527 of 16S rRNA. The chain is Ribosomal RNA small subunit methyltransferase G from Pectobacterium carotovorum subsp. carotovorum (strain PC1).